Consider the following 1783-residue polypeptide: Doublecortin domain-containing protein 1 (1783 aa).

Residues 93 to 133 (GLQDCSTHQTASDHSHDEISDLDSYKSNSKNNSCSISASKR) are disordered. Residues 117–131 (YKSNSKNNSCSISAS) are compositionally biased toward low complexity. The Doublecortin 1 domain occupies 168-252 (KLQPRVIKVT…FLNPFKKIKD (85 aa)). One can recognise a Ricin B-type lectin 1 domain in the interval 702-800 (WLITKTGMIL…HIHHGAWTTA (99 aa)). A disordered region spans residues 860–880 (ASAQRWAIKHEGTSKPGQWKH). The region spanning 925–1015 (PICKTTEPYA…ELWINPDLSI (91 aa)) is the Doublecortin 2 domain. The Ricin B-type lectin 2 domain occupies 1151–1266 (SCSPKHSKLH…GAANQKWHYM (116 aa)).

In terms of assembly, interacts with dynein intermediate chain, tubulin, RAB8A, RAB3IP, NUDC, PAFAH1B1 and DCTN1.

It is found in the midbody. It localises to the midbody ring. The protein localises to the cytoplasm. The protein resides in the cytoskeleton. Its subcellular location is the spindle. Its function is as follows. Microtubule-binding protein which plays an important role in mediating dynein-dependent transport of RAB8A-positive vesicles to the midbody during cytokinesis. This is Doublecortin domain-containing protein 1 from Homo sapiens (Human).